We begin with the raw amino-acid sequence, 200 residues long: Ribonuclease HII (200 aa).

An RNase H type-2 domain is found at 14-200; sequence ERVAGLDEAG…HRQSFTLFRD (187 aa). Positions 20, 21, and 112 each coordinate a divalent metal cation.

This sequence belongs to the RNase HII family. Requires Mn(2+) as cofactor. The cofactor is Mg(2+).

It localises to the cytoplasm. The catalysed reaction is Endonucleolytic cleavage to 5'-phosphomonoester.. Functionally, endonuclease that specifically degrades the RNA of RNA-DNA hybrids. The protein is Ribonuclease HII of Salinibacter ruber (strain DSM 13855 / M31).